The chain runs to 240 residues: EF-hand domain-containing protein D2 (240 aa).

The segment at 1–51 is disordered; that stretch reads MATDELASKLSRRLQMEGEGGEATEQPGLNGAAAAAAAEAPDETAQALGSA. An N-acetylalanine modification is found at A2. Residue S11 is modified to Phosphoserine. The segment covering 32–47 has biased composition (low complexity); that stretch reads AAAAAAAEAPDETAQA. 2 positions are modified to phosphoserine: S74 and S76. Y83 carries the phosphotyrosine modification. 2 EF-hand domains span residues 92–127 and 128–163; these read KQIK…LGAP and QTHL…AAAG. Residues D105, D109, E116, D141, D143, D145, K147, and E152 each contribute to the Ca(2+) site. At K233 the chain carries N6-acetyllysine.

As to quaternary structure, interacts with CASP9; with inactive form. As to expression, detected in thymus, kidney, spleen, lung, liver and brain. Highest abundance in brain and lowest in kidney and thymus.

The protein resides in the membrane raft. Functionally, may regulate B-cell receptor (BCR)-induced immature and primary B-cell apoptosis. Plays a role as negative regulator of the canonical NF-kappa-B-activating branch. Controls spontaneous apoptosis through the regulation of BCL2L1 abundance. The sequence is that of EF-hand domain-containing protein D2 (Efhd2) from Mus musculus (Mouse).